The primary structure comprises 393 residues: Small RNA 2'-O-methyltransferase (393 aa).

Residues Ser-60, Asp-78, and Ser-114 each coordinate S-adenosyl-L-methionine. Mg(2+) is bound by residues Glu-132, Glu-135, His-136, and His-181. Residues 283–309 (RVSHLPRRKEQDGEQGDKPKDIGGSKA) are disordered. The segment covering 290 to 305 (RKEQDGEQGDKPKDIG) has biased composition (basic and acidic residues).

Belongs to the methyltransferase superfamily. HEN1 family. It depends on Mg(2+) as a cofactor.

Its subcellular location is the cytoplasm. It catalyses the reaction small RNA 3'-end nucleotide + S-adenosyl-L-methionine = small RNA 3'-end 2'-O-methylnucleotide + S-adenosyl-L-homocysteine + H(+). Functionally, methyltransferase that adds a 2'-O-methyl group at the 3'-end of piRNAs, a class of 24 to 30 nucleotide RNAs that are generated by a Dicer-independent mechanism and are primarily derived from transposons and other repeated sequence elements. This probably protects the 3'-end of piRNAs from uridylation activity and subsequent degradation. Stabilization of piRNAs is essential for gametogenesis. In Macaca fascicularis (Crab-eating macaque), this protein is Small RNA 2'-O-methyltransferase (HENMT1).